Reading from the N-terminus, the 556-residue chain is 2-succinyl-5-enolpyruvyl-6-hydroxy-3-cyclohexene-1-carboxylate synthase (556 aa).

Belongs to the TPP enzyme family. MenD subfamily. Homodimer. Mg(2+) is required as a cofactor. The cofactor is Mn(2+). It depends on thiamine diphosphate as a cofactor.

The catalysed reaction is isochorismate + 2-oxoglutarate + H(+) = 5-enolpyruvoyl-6-hydroxy-2-succinyl-cyclohex-3-ene-1-carboxylate + CO2. Its pathway is quinol/quinone metabolism; 1,4-dihydroxy-2-naphthoate biosynthesis; 1,4-dihydroxy-2-naphthoate from chorismate: step 2/7. The protein operates within quinol/quinone metabolism; menaquinone biosynthesis. Functionally, catalyzes the thiamine diphosphate-dependent decarboxylation of 2-oxoglutarate and the subsequent addition of the resulting succinic semialdehyde-thiamine pyrophosphate anion to isochorismate to yield 2-succinyl-5-enolpyruvyl-6-hydroxy-3-cyclohexene-1-carboxylate (SEPHCHC). This Escherichia coli (strain 55989 / EAEC) protein is 2-succinyl-5-enolpyruvyl-6-hydroxy-3-cyclohexene-1-carboxylate synthase.